The following is a 96-amino-acid chain: MSNPPLDTEENATTLAITPIPAESLPLVRETVERLRPGVQRDGGDLELVAVQDNIVRLRLKGACVGCAMSAQTLGGVRRELVKVLDNPSVRVLPAP.

Belongs to the NifU family.

This is an uncharacterized protein from Azotobacter vinelandii.